We begin with the raw amino-acid sequence, 458 residues long: Phosphomethylpyrimidine synthase (458 aa).

Residues Asn-80, Met-109, Tyr-139, His-175, 195–197 (SRG), 236–239 (DSLR), and Glu-275 contribute to the substrate site. His-279 provides a ligand contact to Zn(2+). Tyr-302 is a substrate binding site. Residue His-343 coordinates Zn(2+). [4Fe-4S] cluster contacts are provided by Cys-423, Cys-426, and Cys-431.

This sequence belongs to the ThiC family. [4Fe-4S] cluster is required as a cofactor.

The enzyme catalyses 5-amino-1-(5-phospho-beta-D-ribosyl)imidazole + S-adenosyl-L-methionine = 4-amino-2-methyl-5-(phosphooxymethyl)pyrimidine + CO + 5'-deoxyadenosine + formate + L-methionine + 3 H(+). Its pathway is cofactor biosynthesis; thiamine diphosphate biosynthesis. In terms of biological role, catalyzes the synthesis of the hydroxymethylpyrimidine phosphate (HMP-P) moiety of thiamine from aminoimidazole ribotide (AIR) in a radical S-adenosyl-L-methionine (SAM)-dependent reaction. The polypeptide is Phosphomethylpyrimidine synthase (Cyanothece sp. (strain PCC 7425 / ATCC 29141)).